The chain runs to 295 residues: Methionine aminopeptidase (295 aa).

Substrate is bound at residue histidine 62. 3 residues coordinate a divalent metal cation: aspartate 82, aspartate 93, and histidine 153. Histidine 161 contributes to the substrate binding site. The a divalent metal cation site is built by glutamate 187 and glutamate 280.

It belongs to the peptidase M24A family. Methionine aminopeptidase archaeal type 2 subfamily. In terms of assembly, monomer. Co(2+) serves as cofactor. It depends on Zn(2+) as a cofactor. The cofactor is Mn(2+). Fe(2+) is required as a cofactor.

The enzyme catalyses Release of N-terminal amino acids, preferentially methionine, from peptides and arylamides.. In terms of biological role, removes the N-terminal methionine from nascent proteins. The N-terminal methionine is often cleaved when the second residue in the primary sequence is small and uncharged (Met-Ala-, Cys, Gly, Pro, Ser, Thr, or Val). In Pyrococcus abyssi (strain GE5 / Orsay), this protein is Methionine aminopeptidase.